The chain runs to 1786 residues: uncharacterized protein (1786 aa).

Disordered regions lie at residues 140 to 191 (QGLR…LPEA), 203 to 329 (RRES…RGGV), and 400 to 480 (GGSD…TPPE). Polar residues predominate over residues 149-158 (SDMNSQTSLT). The span at 232–247 (GHAPEAPAPGESPASS) shows a compositional bias: low complexity. Positions 248–259 (QCLPSQACENDF) are enriched in polar residues. Over residues 306–329 (TSCRQHREEAGDRAGAGEDKRGGV) the composition is skewed to basic and acidic residues. Positions 422–438 (STTPSTNTTRTPSPISS) are enriched in low complexity. A compositionally biased stretch (pro residues) spans 467–480 (VPPPTGPGTATPPE). A Phosphothreonine modification is found at Thr-721. 6 disordered regions span residues 746–907 (SESK…SDGH), 1081–1180 (VRDV…NSSP), 1218–1242 (ASAQRTPEKPKEEEAKEEGKAPKPA), 1291–1348 (KEGV…VSAR), 1362–1460 (SLYI…NSDC), and 1477–1550 (LLGR…EHTP). Basic and acidic residues-rich tracts occupy residues 810 to 828 (MQREHEFKMERGEVTDTSH) and 845 to 861 (KPWERGLQRQSSRHSEA). The span at 1105–1115 (KGSGDSSDKGS) shows a compositional bias: low complexity. Residues 1131–1140 (TPASGGSRSL) show a composition bias toward polar residues. Over residues 1153-1164 (PREEGVDREPRE) the composition is skewed to basic and acidic residues. A compositionally biased stretch (polar residues) spans 1167–1180 (SQVSNGGRLLNSSP). At Ser-1179 the chain carries Phosphoserine. 2 stretches are compositionally biased toward basic and acidic residues: residues 1223–1238 (TPEKPKEEEAKEEGKA) and 1301–1319 (DPDKLAKQLGQVEERDTGH). Polar residues-rich tracts occupy residues 1336–1345 (RNSNPSTESV), 1389–1401 (NVFTVSSSSTQKT), and 1504–1521 (ARSQVPSNPKGSQVSGTS). Residue Arg-1767 is modified to Omega-N-methylarginine.

This is an uncharacterized protein from Mus musculus (Mouse).